A 158-amino-acid polypeptide reads, in one-letter code: Antitoxin TacA (158 aa).

It belongs to the TacA antitoxin family. Forms a complex with cognate toxin TacT.

Functionally, antitoxin component of a type II toxin-antitoxin (TA) system. Counteracts the toxic effect of cognate toxin TacT. In terms of biological role, tacA-TacT both represses and derepresses expression of its own operon. The chain is Antitoxin TacA from Mycobacterium tuberculosis (strain ATCC 25618 / H37Rv).